We begin with the raw amino-acid sequence, 106 residues long: Thiosulfate sulfurtransferase GlpE (106 aa).

The Rhodanese domain occupies 17-105 (EQNEARLVDI…SYRAELPVIA (89 aa)). Cysteine 65 serves as the catalytic Cysteine persulfide intermediate.

It belongs to the GlpE family.

The protein resides in the cytoplasm. It catalyses the reaction thiosulfate + hydrogen cyanide = thiocyanate + sulfite + 2 H(+). The enzyme catalyses thiosulfate + [thioredoxin]-dithiol = [thioredoxin]-disulfide + hydrogen sulfide + sulfite + 2 H(+). Transferase that catalyzes the transfer of sulfur from thiosulfate to thiophilic acceptors such as cyanide or dithiols. May function in a CysM-independent thiosulfate assimilation pathway by catalyzing the conversion of thiosulfate to sulfite, which can then be used for L-cysteine biosynthesis. The chain is Thiosulfate sulfurtransferase GlpE from Vibrio atlanticus (strain LGP32) (Vibrio splendidus (strain Mel32)).